The primary structure comprises 431 residues: Isochorismate synthase MenF (431 aa).

The active-site Proton acceptor is the lysine 183. Glutamate 233 functions as the Proton donor in the catalytic mechanism. Glutamate 277 and glutamate 414 together coordinate Mg(2+).

Belongs to the isochorismate synthase family. The cofactor is Mg(2+).

It catalyses the reaction chorismate = isochorismate. It functions in the pathway quinol/quinone metabolism; 1,4-dihydroxy-2-naphthoate biosynthesis; 1,4-dihydroxy-2-naphthoate from chorismate: step 1/7. The protein operates within quinol/quinone metabolism; menaquinone biosynthesis. Its function is as follows. Catalyzes the conversion of chorismate to isochorismate. This chain is Isochorismate synthase MenF, found in Pasteurella multocida (strain Pm70).